A 151-amino-acid chain; its full sequence is D-aminoacyl-tRNA deacylase (151 aa).

The Gly-cisPro motif, important for rejection of L-amino acids signature appears at 142–143; the sequence is GP.

The protein belongs to the DTD family. Homodimer.

The protein resides in the cytoplasm. The catalysed reaction is glycyl-tRNA(Ala) + H2O = tRNA(Ala) + glycine + H(+). It catalyses the reaction a D-aminoacyl-tRNA + H2O = a tRNA + a D-alpha-amino acid + H(+). Functionally, an aminoacyl-tRNA editing enzyme that deacylates mischarged D-aminoacyl-tRNAs. Also deacylates mischarged glycyl-tRNA(Ala), protecting cells against glycine mischarging by AlaRS. Acts via tRNA-based rather than protein-based catalysis; rejects L-amino acids rather than detecting D-amino acids in the active site. By recycling D-aminoacyl-tRNA to D-amino acids and free tRNA molecules, this enzyme counteracts the toxicity associated with the formation of D-aminoacyl-tRNA entities in vivo and helps enforce protein L-homochirality. This chain is D-aminoacyl-tRNA deacylase, found in Psychrobacter cryohalolentis (strain ATCC BAA-1226 / DSM 17306 / VKM B-2378 / K5).